The following is a 504-amino-acid chain: Histidine ammonia-lyase (504 aa).

The 5-imidazolinone (Ala-Gly) cross-link spans 141–143 (ASG). Serine 142 carries the 2,3-didehydroalanine (Ser) modification.

It belongs to the PAL/histidase family. Post-translationally, contains an active site 4-methylidene-imidazol-5-one (MIO), which is formed autocatalytically by cyclization and dehydration of residues Ala-Ser-Gly.

It is found in the cytoplasm. It carries out the reaction L-histidine = trans-urocanate + NH4(+). It participates in amino-acid degradation; L-histidine degradation into L-glutamate; N-formimidoyl-L-glutamate from L-histidine: step 1/3. The chain is Histidine ammonia-lyase from Geobacillus kaustophilus (strain HTA426).